The following is a 197-amino-acid chain: Nucleoid occlusion factor SlmA (197 aa).

Residues isoleucine 7–leucine 67 form the HTH tetR-type domain. Positions threonine 30 to phenylalanine 49 form a DNA-binding region, H-T-H motif. The stretch at aspartate 109–isoleucine 136 forms a coiled coil.

The protein belongs to the nucleoid occlusion factor SlmA family. Homodimer. Interacts with FtsZ.

It localises to the cytoplasm. It is found in the nucleoid. Required for nucleoid occlusion (NO) phenomenon, which prevents Z-ring formation and cell division over the nucleoid. Acts as a DNA-associated cell division inhibitor that binds simultaneously chromosomal DNA and FtsZ, and disrupts the assembly of FtsZ polymers. SlmA-DNA-binding sequences (SBS) are dispersed on non-Ter regions of the chromosome, preventing FtsZ polymerization at these regions. The polypeptide is Nucleoid occlusion factor SlmA (Shewanella pealeana (strain ATCC 700345 / ANG-SQ1)).